The primary structure comprises 316 residues: Olfactory receptor class A-like protein 1 (316 aa).

Residues 1–8 (MDLCVTIK) are Extracellular-facing. Residues 9 to 29 (GVSFLLQAGLGILANALVLLA) traverse the membrane as a helical segment. The Cytoplasmic portion of the chain corresponds to 30-39 (YAHIRLAEAR). A helical membrane pass occupies residues 40–60 (LQPVDAILCHLALVDLLLLLT). The Extracellular portion of the chain corresponds to 61 to 97 (RGVPQTMTVFGMRNLLDDTGCKVVIYTYRIARALSVC). A disulfide bond links Cys-81 and Cys-169. Residues 98–118 (ITCMLSVFQAVTVAPAAGPLL) traverse the membrane as a helical segment. Residues 119-132 (SGVKARLPQLLAPT) are Cytoplasmic-facing. Residues 133–153 (FAALWFINMAVCIAAPFFSVA) traverse the membrane as a helical segment. At 154-187 (PRNGTVPPFTLNLGFCHVDFHDNLSYVLNGVAVS) the chain is on the extracellular side. Residues Asn-156 and Asn-176 are each glycosylated (N-linked (GlcNAc...) asparagine). A helical membrane pass occupies residues 188–208 (VRDFAFVGAMLASSGFILLLL). Residues 209-233 (HRHRRQVRAVRRSQGSTMETRAART) are Cytoplasmic-facing. The helical transmembrane segment at 234-254 (VLMLVILYSVFFGIDNVIWIY) threads the bilayer. The Extracellular segment spans residues 255–264 (MLTVAQVPPV). Residues 265–285 (VADMRVFFSSCYASLSPFLII) form a helical membrane-spanning segment. Topologically, residues 286-316 (SSNRKLKARMVCATSEQERQAEDGKNSSGKN) are cytoplasmic.

The protein belongs to the G-protein coupled receptor 1 family. Highly expressed in the olfactory rosette where it localizes to a subset of olfactory sensory neurons, mainly in the apical region of the neuroepithelium. Not detected in other tissues tested.

It localises to the cell membrane. Functionally, probable pheromone receptor. Shows high specificity for 4-hydroxyphenylacetic acid. Activation of the receptor stimulates intracellular calcium release. The protein is Olfactory receptor class A-like protein 1 of Danio rerio (Zebrafish).